Here is a 122-residue protein sequence, read N- to C-terminus: MIQMQTNLDVADNSGARRVMCIKVLGGSKRRYASVGDIIVVSIKEAIPRGRVKKGEVMKAVVVRTAKDIRRPDGSVIRFDNNAAVLIDNKKEPIGTRIFGPVPRELRAKNHMKIISLAPEVL.

This sequence belongs to the universal ribosomal protein uL14 family. In terms of assembly, part of the 50S ribosomal subunit. Forms a cluster with proteins L3 and L19. In the 70S ribosome, L14 and L19 interact and together make contacts with the 16S rRNA in bridges B5 and B8.

In terms of biological role, binds to 23S rRNA. Forms part of two intersubunit bridges in the 70S ribosome. This chain is Large ribosomal subunit protein uL14, found in Brucella abortus (strain 2308).